A 301-amino-acid polypeptide reads, in one-letter code: FLPIPYSDDTVKMIILTSENKKHDFYTLDTIKKHNELKESIIKHQVAFITHGFTSSATAEHFLAVAEALLDKGNYLVIMIDWRVAACTNEIAGVKLAYYNYAVSNTRLVGNYIATVTKMLVQKYNVPMANIRLIGHSLGAHISGFAGKKVQELGLGKYSEIIGLDPAGPSFKSQECSQRICETDANYVQIIHTSNHLGTERTLGTVDFYMNNGKNQPGCGLPIIGETCSHTRAVKYFTECIRHECCLIGVPQSKNPQPVSKCTRNECVCVGLNAKTYPKTGSFYVPVESKAPYCNNKGKKI.

Cystine bridges form between Cys-87/Cys-294, Cys-176/Cys-245, Cys-181/Cys-262, Cys-219/Cys-228, Cys-240/Cys-246, and Cys-267/Cys-269. Ser-137 functions as the Nucleophile in the catalytic mechanism. Asp-165 acts as the Charge relay system in catalysis. Residue His-230 is the Charge relay system of the active site.

The protein belongs to the AB hydrolase superfamily. Lipase family. Is not glycosylated. Expressed by the venom gland.

It localises to the secreted. The catalysed reaction is a 1,2-diacyl-sn-glycero-3-phosphocholine + H2O = a 2-acyl-sn-glycero-3-phosphocholine + a fatty acid + H(+). Catalyzes the hydrolysis of phosphatidylcholine with phospholipase A1 activity. Shows hemolytic activity. In Vespa tropica (Greater banded hornet), this protein is Phospholipase A1 VesT1.02.